Here is a 294-residue protein sequence, read N- to C-terminus: Pyridoxal 5'-phosphate synthase subunit PdxS (294 aa).

D-ribose 5-phosphate is bound at residue Asp-24. The active-site Schiff-base intermediate with D-ribose 5-phosphate is the Lys-81. Gly-153 contacts D-ribose 5-phosphate. Arg-165 provides a ligand contact to D-glyceraldehyde 3-phosphate. D-ribose 5-phosphate contacts are provided by residues Gly-214 and 235 to 236 (GS).

This sequence belongs to the PdxS/SNZ family. In the presence of PdxT, forms a dodecamer of heterodimers.

The catalysed reaction is aldehydo-D-ribose 5-phosphate + D-glyceraldehyde 3-phosphate + L-glutamine = pyridoxal 5'-phosphate + L-glutamate + phosphate + 3 H2O + H(+). The protein operates within cofactor biosynthesis; pyridoxal 5'-phosphate biosynthesis. In terms of biological role, catalyzes the formation of pyridoxal 5'-phosphate from ribose 5-phosphate (RBP), glyceraldehyde 3-phosphate (G3P) and ammonia. The ammonia is provided by the PdxT subunit. Can also use ribulose 5-phosphate and dihydroxyacetone phosphate as substrates, resulting from enzyme-catalyzed isomerization of RBP and G3P, respectively. The polypeptide is Pyridoxal 5'-phosphate synthase subunit PdxS (Anoxybacillus flavithermus (strain DSM 21510 / WK1)).